A 284-amino-acid chain; its full sequence is Glutamate 5-kinase 2 (284 aa).

Residue Lys-26 participates in ATP binding. The substrate site is built by Ser-67, Asp-154, and Asn-166. ATP is bound by residues 186-187 (SD) and 228-234 (SGGMVTK).

The protein belongs to the glutamate 5-kinase family.

Its subcellular location is the cytoplasm. The catalysed reaction is L-glutamate + ATP = L-glutamyl 5-phosphate + ADP. It functions in the pathway amino-acid biosynthesis; L-proline biosynthesis; L-glutamate 5-semialdehyde from L-glutamate: step 1/2. Its function is as follows. Catalyzes the transfer of a phosphate group to glutamate to form L-glutamate 5-phosphate. In Mesorhizobium japonicum (strain LMG 29417 / CECT 9101 / MAFF 303099) (Mesorhizobium loti (strain MAFF 303099)), this protein is Glutamate 5-kinase 2.